The primary structure comprises 228 residues: Glycerol-3-phosphate acyltransferase (228 aa).

6 helical membrane passes run 1–21 (MINWLVLNAVILIVAYLLGAT), 56–76 (VPALVVLVIDIFKGALAIALV), 104–124 (MVIIAGLIAIVGHTKSIWIGF), 136–156 (ILLAISWVVGLGTLSVFIVVL), 161–181 (IVSLSSIIAAISVSGLMFFTG), and 183–203 (PLPYQIFAITGGIYVIWRHIS).

The protein belongs to the PlsY family. In terms of assembly, probably interacts with PlsX.

It is found in the cell inner membrane. It carries out the reaction an acyl phosphate + sn-glycerol 3-phosphate = a 1-acyl-sn-glycero-3-phosphate + phosphate. The protein operates within lipid metabolism; phospholipid metabolism. In terms of biological role, catalyzes the transfer of an acyl group from acyl-phosphate (acyl-PO(4)) to glycerol-3-phosphate (G3P) to form lysophosphatidic acid (LPA). This enzyme utilizes acyl-phosphate as fatty acyl donor, but not acyl-CoA or acyl-ACP. This chain is Glycerol-3-phosphate acyltransferase, found in Trichodesmium erythraeum (strain IMS101).